Here is a 369-residue protein sequence, read N- to C-terminus: C-C chemokine receptor type 9 (369 aa).

At 1–48 (MTPTDFTSPIPNMADDYGSESTSSMEDYVNFNFTDFYCEKNNVRQFAS) the chain is on the extracellular side. The N-linked (GlcNAc...) asparagine glycan is linked to Asn-32. Intrachain disulfides connect Cys-38–Cys-289 and Cys-119–Cys-198. The helical transmembrane segment at 49–74 (HFLPPLYWLVFIVGALGNSLVILVYW) threads the bilayer. The Cytoplasmic segment spans residues 75–85 (YCTRVKTMTDM). A helical transmembrane segment spans residues 86–109 (FLLNLAIADLLFLVTLPFWAIAAA). Over 110 to 120 (DQWKFQTFMCK) the chain is Extracellular. The chain crosses the membrane as a helical span at residues 121 to 150 (VVNSMYKMNFYSCVLLIMCISVDRYIAIAQ). Topologically, residues 151-159 (AMRAHTWRE) are cytoplasmic. Residues 160–185 (KRLLYSKMVCFTIWVLAAALCIPEIL) form a helical membrane-spanning segment. Topologically, residues 186–208 (YSQIKEESGIAICTMVYPSDEST) are extracellular. The chain crosses the membrane as a helical span at residues 209 to 243 (KLKSAVLTLKVILGFFLPFVVMACCYTIIIHTLIQ). Residues 244 to 248 (AKKSS) lie on the Cytoplasmic side of the membrane. The chain crosses the membrane as a helical span at residues 249-283 (KHKALKVTITVLTVFVLSQFPYNCILLVQTIDAYA). The Extracellular segment spans residues 284–290 (MFISNCA). Residues 291–321 (VSTNIDICFQVTQTIAFFHSCLNPVLYVFVG) traverse the membrane as a helical segment. The Cytoplasmic segment spans residues 322–369 (ERFRRDLVKTLKNLGCISQAQWVSFTRREGSLKLSSMLLETTSGALSL).

It belongs to the G-protein coupled receptor 1 family. In terms of tissue distribution, highly expressed in the thymus and low in lymph nodes and spleen.

The protein resides in the cell membrane. Functionally, receptor for chemokine SCYA25/TECK. Subsequently transduces a signal by increasing the intracellular calcium ions level. (Microbial infection) Alternative coreceptor with CD4 for HIV-1 infection. The sequence is that of C-C chemokine receptor type 9 (CCR9) from Homo sapiens (Human).